A 248-amino-acid chain; its full sequence is Cell division protein ZapD (248 aa).

Belongs to the ZapD family. In terms of assembly, interacts with FtsZ.

It is found in the cytoplasm. Functionally, cell division factor that enhances FtsZ-ring assembly. Directly interacts with FtsZ and promotes bundling of FtsZ protofilaments, with a reduction in FtsZ GTPase activity. This chain is Cell division protein ZapD, found in Aliivibrio fischeri (strain ATCC 700601 / ES114) (Vibrio fischeri).